A 64-amino-acid polypeptide reads, in one-letter code: Temporin-ALf (64 aa).

Positions 1–22 (MFTLKKSLLLLFFLGTINLSLC) are cleaved as a signal peptide. Positions 23-46 (EQERNAEEERRDEPDERNAEVEKR) are excised as a propeptide. The residue at position 62 (L62) is a Leucine amide.

As to expression, expressed by the skin glands.

Its subcellular location is the secreted. Functionally, antimicrobial peptide with activity against Gram-positive and Gram-negative bacteria and against fungi. Has been tested against S.aureus (MIC=2.5 ug/mL), B.pumilus (MIC=5.0 ug/mL), B.cereus (MIC=30.0 ug/mL), E.coli (MIC=2.5 ug/mL), B.dysenteriae (MIC=5.0 ug/mL), A.cacoaceticus (MIC=30.0 ug/mL), P.aeruginosa (MIC=5.0 ug/mL) and C.albicans (MIC=2.5 ug/mL). Also shows a weak hemolytic activity. The polypeptide is Temporin-ALf (Amolops loloensis (Lolokou Sucker Frog)).